The following is a 307-amino-acid chain: Ras-related protein RabR (307 aa).

Residues 1–10 (MTTTTLLSES) are compositionally biased toward polar residues. The segment at 1 to 45 (MTTTTLLSESTNNSNNTNNNTNNNTNNTMNNNNNNNNNNTIGNNN) is disordered. The span at 11–45 (TNNSNNTNNNTNNNTNNTMNNNNNNNNNNTIGNNN) shows a compositional bias: low complexity. 61-68 (GDEEVGKG) lines the GTP pocket. An Effector region motif is present at residues 83-92 (ENLYNIEVDR). 122-126 (NFHMH) is a GTP binding site. The segment covering 175 to 185 (NFNCQSNSRNS) has biased composition (low complexity). The interval 175–223 (NFNCQSNSRNSTNYNRHSVGNHCPNSPQKGEKENNTHSSTAPPAPPPLP) is disordered. Over residues 186 to 202 (TNYNRHSVGNHCPNSPQ) the composition is skewed to polar residues. 230–233 (NKCD) is a binding site for GTP. A Cysteine methyl ester modification is found at C304. C304 carries the S-geranylgeranyl cysteine lipid modification. Residues 305–307 (NLM) constitute a propeptide, removed in mature form.

Belongs to the small GTPase superfamily. Rab family.

Its subcellular location is the cell membrane. This Dictyostelium discoideum (Social amoeba) protein is Ras-related protein RabR (rabR).